The chain runs to 191 residues: Gastrokine-3 (191 aa).

The N-terminal stretch at 1-30 is a signal peptide; it reads MPLHSLERDNMRRLIAPSILVTVFLVPALA. Asparagine 33 carries an N-linked (GlcNAc...) asparagine glycan. Residues 63-155 enclose the BRICHOS domain; the sequence is NSVQSEWDGV…LCRAVPTYFA (93 aa). An intrachain disulfide couples cysteine 90 to cysteine 147.

It belongs to the gastrokine family. As to expression, expressed in stomach. Present in mucus cells at the base of antral glands, and Brunner glands of the duodenum. Present at lower levels in the mucus neck cell region of the fundus (at protein level).

The protein localises to the secreted. Its function is as follows. Inhibits gastric epithelial cell proliferation. The polypeptide is Gastrokine-3 (Gkn3) (Mus musculus (Mouse)).